A 140-amino-acid chain; its full sequence is Nucleoside diphosphate kinase (140 aa).

ATP-binding residues include lysine 11, phenylalanine 59, arginine 87, threonine 93, arginine 104, and asparagine 114. The Pros-phosphohistidine intermediate role is filled by histidine 117.

Belongs to the NDK family. Homotetramer. Requires Mg(2+) as cofactor.

The protein resides in the cytoplasm. It carries out the reaction a 2'-deoxyribonucleoside 5'-diphosphate + ATP = a 2'-deoxyribonucleoside 5'-triphosphate + ADP. The catalysed reaction is a ribonucleoside 5'-diphosphate + ATP = a ribonucleoside 5'-triphosphate + ADP. In terms of biological role, major role in the synthesis of nucleoside triphosphates other than ATP. The ATP gamma phosphate is transferred to the NDP beta phosphate via a ping-pong mechanism, using a phosphorylated active-site intermediate. The sequence is that of Nucleoside diphosphate kinase from Sphingopyxis alaskensis (strain DSM 13593 / LMG 18877 / RB2256) (Sphingomonas alaskensis).